Reading from the N-terminus, the 317-residue chain is Beta-ketoacyl-[acyl-carrier-protein] synthase III (317 aa).

Active-site residues include C112 and H244. The tract at residues 245 to 249 (QANIR) is ACP-binding. N274 is an active-site residue.

It belongs to the thiolase-like superfamily. FabH family. As to quaternary structure, homodimer.

It is found in the cytoplasm. It carries out the reaction malonyl-[ACP] + acetyl-CoA + H(+) = 3-oxobutanoyl-[ACP] + CO2 + CoA. It participates in lipid metabolism; fatty acid biosynthesis. In terms of biological role, catalyzes the condensation reaction of fatty acid synthesis by the addition to an acyl acceptor of two carbons from malonyl-ACP. Catalyzes the first condensation reaction which initiates fatty acid synthesis and may therefore play a role in governing the total rate of fatty acid production. Possesses both acetoacetyl-ACP synthase and acetyl transacylase activities. Its substrate specificity determines the biosynthesis of branched-chain and/or straight-chain of fatty acids. The polypeptide is Beta-ketoacyl-[acyl-carrier-protein] synthase III (Rickettsia typhi (strain ATCC VR-144 / Wilmington)).